The primary structure comprises 481 residues: Glycosyl hydrolase family 109 protein 1 (481 aa).

Positions 1 to 29 (MDNSSSRRRFLQTLGLATGALAAGSFANA) form a signal peptide, tat-type signal. NAD(+) is bound by residues 84–85 (ER), D106, 155–158 (WEWH), 175–176 (EV), and N204. Substrate-binding positions include Y233, R252, 264 to 267 (YPTH), and Y347. Residue Y264 coordinates NAD(+).

The protein belongs to the Gfo/Idh/MocA family. Glycosyl hydrolase 109 subfamily. It depends on NAD(+) as a cofactor. Post-translationally, predicted to be exported by the Tat system. The position of the signal peptide cleavage has not been experimentally proven.

In terms of biological role, glycosidase. The chain is Glycosyl hydrolase family 109 protein 1 from Akkermansia muciniphila (strain ATCC BAA-835 / DSM 22959 / JCM 33894 / BCRC 81048 / CCUG 64013 / CIP 107961 / Muc).